A 251-amino-acid chain; its full sequence is 14-3-3-like protein (251 aa).

Belongs to the 14-3-3 family. As to expression, most abundant in roots and flowers.

The sequence is that of 14-3-3-like protein from Nicotiana tabacum (Common tobacco).